The following is a 427-amino-acid chain: 3-phosphoshikimate 1-carboxyvinyltransferase (427 aa).

3 residues coordinate 3-phosphoshikimate: Lys22, Ser23, and Arg27. Lys22 lines the phosphoenolpyruvate pocket. The phosphoenolpyruvate site is built by Gly96 and Arg124. Ser169, Ser170, Gln171, Ser197, Asp313, Asn336, and Lys340 together coordinate 3-phosphoshikimate. Position 171 (Gln171) interacts with phosphoenolpyruvate. The Proton acceptor role is filled by Asp313. 3 residues coordinate phosphoenolpyruvate: Arg344, Arg386, and Lys411.

The protein belongs to the EPSP synthase family. As to quaternary structure, monomer.

The protein resides in the cytoplasm. The enzyme catalyses 3-phosphoshikimate + phosphoenolpyruvate = 5-O-(1-carboxyvinyl)-3-phosphoshikimate + phosphate. The protein operates within metabolic intermediate biosynthesis; chorismate biosynthesis; chorismate from D-erythrose 4-phosphate and phosphoenolpyruvate: step 6/7. Its function is as follows. Catalyzes the transfer of the enolpyruvyl moiety of phosphoenolpyruvate (PEP) to the 5-hydroxyl of shikimate-3-phosphate (S3P) to produce enolpyruvyl shikimate-3-phosphate and inorganic phosphate. The chain is 3-phosphoshikimate 1-carboxyvinyltransferase from Salmonella typhimurium (strain LT2 / SGSC1412 / ATCC 700720).